Consider the following 105-residue polypeptide: Co-chaperonin GroES (105 aa).

Belongs to the GroES chaperonin family. In terms of assembly, heptamer of 7 subunits arranged in a ring. Interacts with the chaperonin GroEL.

It localises to the cytoplasm. Together with the chaperonin GroEL, plays an essential role in assisting protein folding. The GroEL-GroES system forms a nano-cage that allows encapsulation of the non-native substrate proteins and provides a physical environment optimized to promote and accelerate protein folding. GroES binds to the apical surface of the GroEL ring, thereby capping the opening of the GroEL channel. The polypeptide is Co-chaperonin GroES (Methylovorus sp. (strain SS1 / DSM 11726)).